The sequence spans 119 residues: Beta-2-microglobulin (119 aa).

An N-terminal signal peptide occupies residues 1 to 20; sequence MFRSVALAVLALLFLSGLEA. The Ig-like C1-type domain occupies 25 to 114; sequence PKIQVYSRHP…VTLSGPRTVK (90 aa). Cysteines 45 and 100 form a disulfide.

It belongs to the beta-2-microglobulin family. Heterodimer of an alpha chain and a beta chain. Beta-2-microglobulin is the beta-chain of major histocompatibility complex class I molecules.

Its subcellular location is the secreted. Component of the class I major histocompatibility complex (MHC). Involved in the presentation of peptide antigens to the immune system. In Chlorocebus aethiops (Green monkey), this protein is Beta-2-microglobulin (B2M).